Reading from the N-terminus, the 473-residue chain is ATP synthase subunit beta (473 aa).

An ATP-binding site is contributed by 158 to 165; that stretch reads GGAGVGKT.

Belongs to the ATPase alpha/beta chains family. F-type ATPases have 2 components, CF(1) - the catalytic core - and CF(0) - the membrane proton channel. CF(1) has five subunits: alpha(3), beta(3), gamma(1), delta(1), epsilon(1). CF(0) has three main subunits: a(1), b(2) and c(9-12). The alpha and beta chains form an alternating ring which encloses part of the gamma chain. CF(1) is attached to CF(0) by a central stalk formed by the gamma and epsilon chains, while a peripheral stalk is formed by the delta and b chains.

The protein localises to the cell membrane. The catalysed reaction is ATP + H2O + 4 H(+)(in) = ADP + phosphate + 5 H(+)(out). In terms of biological role, produces ATP from ADP in the presence of a proton gradient across the membrane. The catalytic sites are hosted primarily by the beta subunits. This chain is ATP synthase subunit beta, found in Bacillus sp. (strain PS3).